A 353-amino-acid chain; its full sequence is Inactive metacaspase-4 (353 aa).

G2 is lipidated: N-myristoyl glycine.

This sequence belongs to the peptidase C14B family. In terms of processing, palmitoylated. Post-translationally, proteolytic cleavage by MCA3 occurs prior or during secretion and requires MCA4 membrane localization. Cleavage is dispensable for secretion and parasite growth and virulence in the mammalian host. In vitro, can be cleaved by MCA2 but specifically cleaved by MCA3 in vivo.

The protein resides in the cell projection. It localises to the cilium. Its subcellular location is the flagellum membrane. It is found in the secreted. In terms of biological role, inactive metacaspase which plays a role in parasite bloodstream form growth and in parasite virulence within the mammalian host. The chain is Inactive metacaspase-4 from Trypanosoma brucei brucei.